The primary structure comprises 225 residues: Zinc finger protein 22 (225 aa).

The interval 1 to 35 (MRLGKPKGGISRSSSQGKVYENQRKTGRQRQRWGM) is disordered. Position 18 is an N6-acetyllysine (lysine 18). C2H2-type zinc fingers lie at residues 55–77 (YKCVECEKSFSQSSTLFQHQKIH), 83–105 (HKCADCGKSFFQSSNLIQHRRVH), 111–133 (YRCDECGERFKQSSNLIQHQRIH), 139–161 (YQCDECGRCFSQSSHLIQHQRTH), and 167–189 (YQCSECGKCFSQSSHLRQHTKVH). The disordered stretch occupies residues 183-225 (RQHTKVHEEEKPRKTRGRSLRAKTHSLSSWKAGKGRRSAAGLR). Positions 195-206 (RKTRGRSLRAKT) are enriched in basic residues.

The protein belongs to the krueppel C2H2-type zinc-finger protein family.

It is found in the nucleus. In terms of biological role, binds DNA through the consensus sequence 5'-CAATG-3'. May be involved in transcriptional regulation and may play a role in tooth formation. This is Zinc finger protein 22 (ZNF22) from Bos taurus (Bovine).